We begin with the raw amino-acid sequence, 204 residues long: Adenylyl-sulfate kinase (204 aa).

Residue 34-41 (GLSGSGKS) coordinates ATP. Catalysis depends on Ser108, which acts as the Phosphoserine intermediate.

This sequence belongs to the APS kinase family.

It carries out the reaction adenosine 5'-phosphosulfate + ATP = 3'-phosphoadenylyl sulfate + ADP + H(+). It participates in sulfur metabolism; hydrogen sulfide biosynthesis; sulfite from sulfate: step 2/3. Functionally, catalyzes the synthesis of activated sulfate. In Phocaeicola vulgatus (strain ATCC 8482 / DSM 1447 / JCM 5826 / CCUG 4940 / NBRC 14291 / NCTC 11154) (Bacteroides vulgatus), this protein is Adenylyl-sulfate kinase.